Reading from the N-terminus, the 321-residue chain is tRNA U34 carboxymethyltransferase (321 aa).

Residues lysine 90, tryptophan 104, lysine 109, glycine 129, 151-153 (DPT), 180-181 (IE), methionine 195, tyrosine 199, and arginine 314 contribute to the carboxy-S-adenosyl-L-methionine site.

This sequence belongs to the class I-like SAM-binding methyltransferase superfamily. CmoB family. In terms of assembly, homotetramer.

It catalyses the reaction carboxy-S-adenosyl-L-methionine + 5-hydroxyuridine(34) in tRNA = 5-carboxymethoxyuridine(34) in tRNA + S-adenosyl-L-homocysteine + H(+). Catalyzes carboxymethyl transfer from carboxy-S-adenosyl-L-methionine (Cx-SAM) to 5-hydroxyuridine (ho5U) to form 5-carboxymethoxyuridine (cmo5U) at position 34 in tRNAs. The polypeptide is tRNA U34 carboxymethyltransferase (Haemophilus influenzae (strain PittEE)).